The chain runs to 516 residues: uncharacterized protein (516 aa).

Ser21 bears the Phosphoserine mark. The disordered stretch occupies residues 46-74 (DLQSSMEDSNKANGNGEETTDGAEGVLQT). Residues 47 to 62 (LQSSMEDSNKANGNGE) are compositionally biased toward polar residues. WD repeat units follow at residues 182 to 227 (TFPL…AVYP), 252 to 292 (YHTD…CVKS), 295 to 335 (YHSD…APSS), 337 to 377 (QVTS…KSVW), 381 to 421 (AHDG…PKMV), and 426 to 468 (LDVG…GVRK). Basic and acidic residues predominate over residues 482 to 493 (ERIVQLEDRGAG). The disordered stretch occupies residues 482–516 (ERIVQLEDRGAGEDSSDDDDYEDIEDDDDQDAEMS). Residues 495-516 (DSSDDDDYEDIEDDDDQDAEMS) are compositionally biased toward acidic residues. Phosphoserine occurs at positions 496 and 497.

It is found in the cytoplasm. The protein resides in the nucleus. Its subcellular location is the nucleolus. This is an uncharacterized protein from Schizosaccharomyces pombe (strain 972 / ATCC 24843) (Fission yeast).